Here is a 154-residue protein sequence, read N- to C-terminus: MQHYETVEAVTFAYGQHHHLEIQITREIAKEQGIRHHILDMSLLGQITAQPDFATIHISYIPDKLCVESKSLKLYLFSYRNHGDFHENCINTIGKDLVNLLDPRYLEVWGKFTPRGGISIDPYYNYGKQGTKYEGLAEQRLFQHDLYPEKIDNR.

Catalysis depends on Asp-52, which acts as the Proton donor. Residues Val-67 to Ser-69 and His-86 to Glu-87 contribute to the substrate site.

It belongs to the GTP cyclohydrolase I family. QueF type 1 subfamily.

It is found in the cytoplasm. The enzyme catalyses 7-aminomethyl-7-carbaguanine + 2 NADP(+) = 7-cyano-7-deazaguanine + 2 NADPH + 3 H(+). Its pathway is tRNA modification; tRNA-queuosine biosynthesis. Catalyzes the NADPH-dependent reduction of 7-cyano-7-deazaguanine (preQ0) to 7-aminomethyl-7-deazaguanine (preQ1). This Streptococcus pneumoniae (strain ATCC BAA-255 / R6) protein is Putative NADPH-dependent 7-cyano-7-deazaguanine reductase.